The sequence spans 42 residues: Protein Tat (42 aa).

The interaction with human CREBBP stretch occupies residues 1–24 (MEPVDPNLEPWNHPGSQPKTACNQ). Residues 22-37 (CNQCYCKKCSYHCLVC) are cysteine-rich. Lys-28 is subject to N6-acetyllysine; by host PCAF.

This sequence belongs to the lentiviruses Tat family. Interacts with host CCNT1. Associates with the P-TEFb complex composed at least of Tat, P-TEFb (CDK9 and CCNT1), TAR RNA, RNA Pol II. Recruits the HATs CREBBP, TAF1/TFIID, EP300, PCAF and GCN5L2. Interacts with host KAT5/Tip60; this interaction targets the latter to degradation. Interacts with the host deacetylase SIRT1. Interacts with host capping enzyme RNGTT; this interaction stimulates RNGTT. Binds to host KDR, and to the host integrins ITGAV/ITGB3 and ITGA5/ITGB1. Interacts with host KPNB1/importin beta-1 without previous binding to KPNA1/importin alpha-1. Interacts with EIF2AK2. Interacts with host nucleosome assembly protein NAP1L1; this interaction may be required for the transport of Tat within the nucleus, since the two proteins interact at the nuclear rim. Interacts with host C1QBP/SF2P32; this interaction involves lysine-acetylated Tat. Interacts with the host chemokine receptors CCR2, CCR3 and CXCR4. Interacts with host DPP4/CD26; this interaction may trigger an anti-proliferative effect. Interacts with host LDLR. Interacts with the host extracellular matrix metalloproteinase MMP1. Interacts with host PRMT6; this interaction mediates Tat's methylation. Interacts with, and is ubiquitinated by MDM2/Hdm2. Interacts with host PSMC3 and HTATIP2. Interacts with STAB1; this interaction may overcome SATB1-mediated repression of IL2 and IL2RA (interleukin) in T cells by binding to the same domain than HDAC1. Interacts (when acetylated) with human CDK13, thereby increasing HIV-1 mRNA splicing and promoting the production of the doubly spliced HIV-1 protein Nef. Interacts with host TBP; this interaction modulates the activity of transcriptional pre-initiation complex. Interacts with host RELA. Interacts with host PLSCR1; this interaction negatively regulates Tat transactivation activity by altering its subcellular distribution. Phosphorylated by EIF2AK2 on serine and threonine residues adjacent to the basic region important for TAR RNA binding and function. Phosphorylation of Tat by EIF2AK2 is dependent on the prior activation of EIF2AK2 by dsRNA. In terms of processing, asymmetrical arginine methylation by host PRMT6 seems to diminish the transactivation capacity of Tat and affects the interaction with host CCNT1. Post-translationally, polyubiquitination by host MDM2 does not target Tat to degradation, but activates its transactivation function and fosters interaction with CCNT1 and TAR RNA.

It is found in the host nucleus. The protein localises to the host nucleolus. It localises to the host cytoplasm. The protein resides in the secreted. Functionally, transcriptional activator that increases RNA Pol II processivity, thereby increasing the level of full-length viral transcripts. Recognizes a hairpin structure at the 5'-LTR of the nascent viral mRNAs referred to as the transactivation responsive RNA element (TAR) and recruits the cyclin T1-CDK9 complex (P-TEFb complex) that will in turn hyperphosphorylate the RNA polymerase II to allow efficient elongation. The CDK9 component of P-TEFb and other Tat-activated kinases hyperphosphorylate the C-terminus of RNA Pol II that becomes stabilized and much more processive. Other factors such as HTATSF1/Tat-SF1, SUPT5H/SPT5, and HTATIP2 are also important for Tat's function. Besides its effect on RNA Pol II processivity, Tat induces chromatin remodeling of proviral genes by recruiting the histone acetyltransferases (HATs) CREBBP, EP300 and PCAF to the chromatin. This also contributes to the increase in proviral transcription rate, especially when the provirus integrates in transcriptionally silent region of the host genome. To ensure maximal activation of the LTR, Tat mediates nuclear translocation of NF-kappa-B by interacting with host RELA. Through its interaction with host TBP, Tat may also modulate transcription initiation. Tat can reactivate a latently infected cell by penetrating in it and transactivating its LTR promoter. In the cytoplasm, Tat is thought to act as a translational activator of HIV-1 mRNAs. In terms of biological role, extracellular circulating Tat can be endocytosed by surrounding uninfected cells via the binding to several surface receptors such as CD26, CXCR4, heparan sulfate proteoglycans (HSPG) or LDLR. Neurons are rarely infected, but they internalize Tat via their LDLR. Through its interaction with nuclear HATs, Tat is potentially able to control the acetylation-dependent cellular gene expression. Modulates the expression of many cellular genes involved in cell survival, proliferation or in coding for cytokines or cytokine receptors. Tat plays a role in T-cell and neurons apoptosis. Tat induced neurotoxicity and apoptosis probably contribute to neuroAIDS. Circulating Tat also acts as a chemokine-like and/or growth factor-like molecule that binds to specific receptors on the surface of the cells, affecting many cellular pathways. In the vascular system, Tat binds to ITGAV/ITGB3 and ITGA5/ITGB1 integrins dimers at the surface of endothelial cells and competes with bFGF for heparin-binding sites, leading to an excess of soluble bFGF. The sequence is that of Protein Tat from Human immunodeficiency virus type 1 group M subtype C (isolate ETH2220) (HIV-1).